The chain runs to 5233 residues: E3 ubiquitin-protein ligase highwire (5233 aa).

Residues 197-230 (VVGGPGLPAEKRPRRDSANSDADSDTEEPTEREP) form a disordered region. The segment covering 205–214 (AEKRPRRDSA) has biased composition (basic and acidic residues). Phosphoserine is present on residues serine 213 and serine 216. RCC1 repeat units lie at residues 615–666 (NGRV…ALLV), 669–724 (DGTV…FVTK), and 768–818 (KGQL…DKRL). The disordered stretch occupies residues 680-700 (RGEDGDSSKNRRQPKAVKPKK). Over residues 689-700 (NRRQPKAVKPKK) the composition is skewed to basic residues. Residues 900-950 (TELKPPPSDVQQRQQRSKTLIMRRKERKGELETGAAGGGAATPTDLDKDPP) are disordered. A compositionally biased stretch (polar residues) spans 908–917 (DVQQRQQRSK). 3 RCC1 repeats span residues 931–983 (ETGA…VLTL), 984–1033 (AGEV…LLTS), and 1035–1084 (GMVY…TVAP). Disordered stretches follow at residues 1051-1109 (LPSD…EMPP) and 1287-1327 (AAAA…PPQL). Polar residues predominate over residues 1092-1103 (RSQSPANVQPSG). The span at 1287–1302 (AAAAAVAAPGTPVSAG) shows a compositional bias: low complexity. The PHR domain 1 stretch occupies residues 1436–1587 (NRFDNFGGGW…GQIPAILYRL (152 aa)). The segment at 1681–1718 (SSTSVATGGGSNAAHGSGVVTTAKSVQSKPNKDKNTPR) is disordered. The span at 1699–1709 (VVTTAKSVQSK) shows a compositional bias: polar residues. Residues 2014 to 2169 (ARFARCDVSR…GQLPCILYYS (156 aa)) are PHR domain 2. Disordered regions lie at residues 2329-2353 (SADL…VPIN) and 2580-2604 (NGAG…NTHQ). Positions 2336–2350 (QSQSVSQSQSQSQSV) are enriched in low complexity. The segment at 2885 to 4082 (AEVSAPGPNL…FVSSLNPTGG (1198 aa)) is required for interaction with Rae1. The Filamin repeat unit spans residues 2906–3000 (WGGMAPPPRI…LEEVYRVDVK (95 aa)). Disordered stretches follow at residues 3005–3024 (PPPT…SKLR), 3117–3210 (KGVG…EPEQ), 3277–3333 (GGQD…ASET), 3348–3378 (TTTG…PMGP), 3551–3587 (PRLL…DLGR), and 3901–3936 (ASLA…APPV). The span at 3176 to 3191 (KHADLAEREAQVQEER) shows a compositional bias: basic and acidic residues. Positions 3192–3210 (EKEEEQVDDEDADDREPEQ) are enriched in acidic residues. A compositionally biased stretch (polar residues) spans 3282 to 3292 (PRGNGNRSQQE). Residues 3348–3371 (TTTGQGEQQSELQLATTSTASSAS) are compositionally biased toward low complexity. Residues 3917 to 3932 (QHHQQQQMNLQLQQHQ) show a composition bias toward low complexity. Positions 4195–4374 (HNQVHSVATG…KHQPHLRLSH (180 aa)) constitute a DOC domain. Disordered stretches follow at residues 4633 to 4655 (ASTG…GAVL) and 4680 to 4702 (LRSR…ALPP). Over residues 4638-4652 (SGSGGVSGSSSGNGG) the composition is skewed to gly residues. Zn(2+) contacts are provided by cysteine 4991, cysteine 4994, cysteine 5009, histidine 5011, histidine 5014, cysteine 5017, cysteine 5038, cysteine 5041, cysteine 5101, and cysteine 5104. The RING-type; atypical zinc-finger motif lies at 4991–5042 (CMICFVEALSCAPSIHLECGHVFHYHCCKAVLEKRWSGPRITFGFSLCPICK). The tandem cysteine domain stretch occupies residues 5096–5231 (YAYYVCFKCQ…LGCGVCRNAQ (136 aa)). Residue cysteine 5115 is part of the active site. Zn(2+) is bound by residues cysteine 5130, cysteine 5133, cysteine 5142, histidine 5145, cysteine 5154, cysteine 5157, and cysteine 5158. Residue cysteine 5165 is part of the active site. Zn(2+) contacts are provided by cysteine 5172, cysteine 5175, cysteine 5193, cysteine 5207, histidine 5213, cysteine 5224, and cysteine 5227.

This sequence belongs to the RING-Cys relay (RCR) family. As to quaternary structure, component of an E3 ubiquitin ligase complex composed of hiw, Rae1 and Fsn. Interacts with Rae1; the interaction with Rae1 may protect hiw from autophagy-mediated degradation. Express throughout the nervous system. Stage 13 embryos show expression in the central nervous system (CNS) at the longitudinal axon tracts around which the synaptic neuropil forms. Expression outside the CNS starts at stage 16 in presynaptic terminals at the periactive zone which surround the active zone. Expression at neuromuscular junctions (NMJ) and in the CNS is also seen in third instar larvae (at protein level).

Its subcellular location is the synapse. It localises to the cell projection. The protein localises to the axon. It catalyses the reaction [E2 ubiquitin-conjugating enzyme]-S-ubiquitinyl-L-cysteine + [acceptor protein]-L-threonine = [E2 ubiquitin-conjugating enzyme]-L-cysteine + [acceptor protein]-3-O-ubiquitinyl-L-threonine.. The protein operates within protein modification; protein ubiquitination. Functionally, atypical E3 ubiquitin-protein ligase which specifically mediates ubiquitination of threonine and serine residues on target proteins, instead of ubiquitinating lysine residues. Shows esterification activity towards both threonine and serine, with a preference for threonine, and acts via two essential catalytic cysteine residues that relay ubiquitin to its substrate via thioester intermediates. Required in the presynaptic motoneuron to down-regulate the levels of wnd and restrain synaptic terminal growth at the neuromuscular junction (NMJ) together with Rae1 and Fsn. The sequence is that of E3 ubiquitin-protein ligase highwire from Drosophila melanogaster (Fruit fly).